A 173-amino-acid polypeptide reads, in one-letter code: Crossover junction endodeoxyribonuclease RuvC (173 aa).

Residues Asp8, Glu67, and Asp139 contribute to the active site. Residues Asp8, Glu67, and Asp139 each contribute to the Mg(2+) site.

This sequence belongs to the RuvC family. Homodimer which binds Holliday junction (HJ) DNA. The HJ becomes 2-fold symmetrical on binding to RuvC with unstacked arms; it has a different conformation from HJ DNA in complex with RuvA. In the full resolvosome a probable DNA-RuvA(4)-RuvB(12)-RuvC(2) complex forms which resolves the HJ. It depends on Mg(2+) as a cofactor.

The protein localises to the cytoplasm. It carries out the reaction Endonucleolytic cleavage at a junction such as a reciprocal single-stranded crossover between two homologous DNA duplexes (Holliday junction).. Its function is as follows. The RuvA-RuvB-RuvC complex processes Holliday junction (HJ) DNA during genetic recombination and DNA repair. Endonuclease that resolves HJ intermediates. Cleaves cruciform DNA by making single-stranded nicks across the HJ at symmetrical positions within the homologous arms, yielding a 5'-phosphate and a 3'-hydroxyl group; requires a central core of homology in the junction. The consensus cleavage sequence is 5'-(A/T)TT(C/G)-3'. Cleavage occurs on the 3'-side of the TT dinucleotide at the point of strand exchange. HJ branch migration catalyzed by RuvA-RuvB allows RuvC to scan DNA until it finds its consensus sequence, where it cleaves and resolves the cruciform DNA. This Salmonella choleraesuis (strain SC-B67) protein is Crossover junction endodeoxyribonuclease RuvC.